The chain runs to 117 residues: Circadian clock oscillator protein KaiB (117 aa).

The protein belongs to the KaiB family. As to quaternary structure, may undergo a major conformational rearrangment; in the free state forms homooligomers. When bound to KaiC switches to a monomeric thioredoxin-fold (KaiB(fs)). The active oscillator complex is probably KaiC(6):KaiB(6).

Functionally, component of the KaiBC clock protein complex, which constitutes the main circadian regulator in cyanobacteria; it may modify the ATPase activity of KaiC. May be a metamorphic protein which reversibly switches between an inactive tetrameric fold and a rare, thioredoxin-like monomeric fold (KaiB(fs)). KaiB(fs) binds phospho-KaiC, and perhaps clock output effectors. The sequence is that of Circadian clock oscillator protein KaiB from Prochlorococcus marinus (strain SARG / CCMP1375 / SS120).